The sequence spans 356 residues: Heat-inducible transcription repressor HrcA (356 aa).

This sequence belongs to the HrcA family.

Negative regulator of class I heat shock genes (grpE-dnaK-dnaJ and groELS operons). Prevents heat-shock induction of these operons. In Chelativorans sp. (strain BNC1), this protein is Heat-inducible transcription repressor HrcA.